Consider the following 159-residue polypeptide: Ribosomal RNA large subunit methyltransferase H (159 aa).

S-adenosyl-L-methionine is bound by residues Leu76, Gly108, and 127–132; that span reads FSKMTF.

Belongs to the RNA methyltransferase RlmH family. Homodimer.

The protein localises to the cytoplasm. It catalyses the reaction pseudouridine(1915) in 23S rRNA + S-adenosyl-L-methionine = N(3)-methylpseudouridine(1915) in 23S rRNA + S-adenosyl-L-homocysteine + H(+). Functionally, specifically methylates the pseudouridine at position 1915 (m3Psi1915) in 23S rRNA. The chain is Ribosomal RNA large subunit methyltransferase H from Clostridium botulinum (strain Kyoto / Type A2).